Here is a 103-residue protein sequence, read N- to C-terminus: Large ribosomal subunit protein bL21 (103 aa).

This sequence belongs to the bacterial ribosomal protein bL21 family. Part of the 50S ribosomal subunit. Contacts protein L20.

This protein binds to 23S rRNA in the presence of protein L20. In Chloroflexus aurantiacus (strain ATCC 29364 / DSM 637 / Y-400-fl), this protein is Large ribosomal subunit protein bL21.